The primary structure comprises 118 residues: Secreted RxLR effector protein 143 (118 aa).

Residues 1–18 form the signal peptide; that stretch reads MRHCAFLFRLFLIGYSCS. A compositionally biased stretch (basic and acidic residues) spans 35–65; the sequence is DELPRAEQWDSDGKRILQADDPEHIPTEERG. Residues 35–66 are disordered; the sequence is DELPRAEQWDSDGKRILQADDPEHIPTEERGI. The short motif at 49–64 is the RxLR-dEER element; sequence RILQADDPEHIPTEER.

The protein belongs to the RxLR effector family.

It is found in the secreted. The protein localises to the host cell membrane. Secreted effector that completely suppresses the host cell death induced by cell death-inducing proteins. In Plasmopara viticola (Downy mildew of grapevine), this protein is Secreted RxLR effector protein 143.